The primary structure comprises 98 residues: (4S)-4-hydroxy-5-phosphonooxypentane-2,3-dione isomerase (98 aa).

In terms of domain architecture, ABM spans 2–91 (NVTLVEINIK…MSQPRQKRSF (90 aa)).

This sequence belongs to the LsrG family. As to quaternary structure, homodimer.

It is found in the cytoplasm. It carries out the reaction (2S)-2-hydroxy-3,4-dioxopentyl phosphate = 3-hydroxy-2,4-dioxopentyl phosphate. Involved in the degradation of phospho-AI-2, thereby terminating induction of the lsr operon and closing the AI-2 signaling cycle. Catalyzes the conversion of (4S)-4-hydroxy-5-phosphonooxypentane-2,3-dione (P-DPD) to 3-hydroxy-5-phosphonooxypentane-2,4-dione (P-HPD). The polypeptide is (4S)-4-hydroxy-5-phosphonooxypentane-2,3-dione isomerase (Klebsiella pneumoniae subsp. pneumoniae (strain ATCC 700721 / MGH 78578)).